The following is a 455-amino-acid chain: N-lysine methyltransferase setd6 (455 aa).

One can recognise an SET domain in the interval 38–266 (PKVYISTEGT…AGQELFNTYG (229 aa)).

Belongs to the class V-like SAM-binding methyltransferase superfamily. Histone-lysine methyltransferase family. SETD6 subfamily.

It localises to the nucleus. In terms of biological role, protein-lysine N-methyltransferase. This chain is N-lysine methyltransferase setd6 (setd6), found in Xenopus laevis (African clawed frog).